Consider the following 144-residue polypeptide: Maximins 1/H1 (144 aa).

A signal peptide spans 1–18; the sequence is MNFKYIVAVSFLLASAYA. The propeptide occupies 19 to 43; the sequence is RSEENDEQSLSQRDVLEEESLREIR. N70 carries the post-translational modification Asparagine amide. Residues 74–123 constitute a propeptide that is removed on maturation; that stretch reads TAEEHEVMKRLEAVMRDLDSLDYPEEAAERETRSFNQEEIANLFTKKEKR. The residue at position 143 (L143) is a Leucine amide.

Belongs to the bombinin family. In terms of tissue distribution, expressed by the skin glands.

Its subcellular location is the secreted. Antibacterial peptide with amphipathic alpha-helical structure that has activity against both Gram-positive and Gram-negative bacteria. Also shows antimicrobial activity against the fungus C.albicans, but not against A.flavus nor P.uticale. It has little hemolytic activity. It possess a significant cytotoxicity against tumor cell lines, but does not possess a significant anti-HIV activity. Also shows high spermicidal activity. Its function is as follows. antibacterial peptide with activity against both Gram-positive and Gram-negative bacteria. Also shows antimicrobial activity against the fungus C.albicans. In addition, shows strong hemolytic activity. The protein is Maximins 1/H1 of Bombina maxima (Giant fire-bellied toad).